The following is a 222-amino-acid chain: Ras-related protein Rab11D (222 aa).

A GTP-binding site is contributed by Gly-22–Ser-29. The Effector region motif lies at Ser-44 to Phe-52. Residues Asp-70 to Gln-74 and Asn-128 to Asp-131 each bind GTP. 2 S-geranylgeranyl cysteine lipidation sites follow: Cys-219 and Cys-220.

Belongs to the small GTPase superfamily. Rab family.

The protein localises to the cell membrane. This Nicotiana tabacum (Common tobacco) protein is Ras-related protein Rab11D (RAB11D).